Reading from the N-terminus, the 268-residue chain is Type-5 uracil-DNA glycosylase (268 aa).

Residues 1-29 form a disordered region; it reads MHPKTGRAFRSPVEPGSGWPGDPATPQTP. [4Fe-4S] cluster is bound by residues cysteine 57, cysteine 60, cysteine 161, and cysteine 176.

This sequence belongs to the uracil-DNA glycosylase (UDG) superfamily. Type 5 (UDGb) family.

Its function is as follows. DNA glycosylase with broad substrate specificity. This is Type-5 uracil-DNA glycosylase from Mycobacterium bovis (strain ATCC BAA-935 / AF2122/97).